A 193-amino-acid polypeptide reads, in one-letter code: Protein GrpE (193 aa).

The interval 1-26 is disordered; sequence MTKKHHKEQEEIQETIKTEAAEENVG. Residues 7–20 are compositionally biased toward basic and acidic residues; it reads KEQEEIQETIKTEA.

Belongs to the GrpE family. As to quaternary structure, homodimer.

The protein resides in the cytoplasm. Participates actively in the response to hyperosmotic and heat shock by preventing the aggregation of stress-denatured proteins, in association with DnaK and GrpE. It is the nucleotide exchange factor for DnaK and may function as a thermosensor. Unfolded proteins bind initially to DnaJ; upon interaction with the DnaJ-bound protein, DnaK hydrolyzes its bound ATP, resulting in the formation of a stable complex. GrpE releases ADP from DnaK; ATP binding to DnaK triggers the release of the substrate protein, thus completing the reaction cycle. Several rounds of ATP-dependent interactions between DnaJ, DnaK and GrpE are required for fully efficient folding. This chain is Protein GrpE, found in Chlorobaculum parvum (strain DSM 263 / NCIMB 8327) (Chlorobium vibrioforme subsp. thiosulfatophilum).